Consider the following 79-residue polypeptide: Short neurotoxin 3 (79 aa).

The signal sequence occupies residues 1-23 (MKTLLLTLVVMTIVCLDLGYTLT). Cystine bridges form between Cys-24-Cys-41, Cys-34-Cys-59, Cys-63-Cys-71, and Cys-72-Cys-77.

The protein belongs to the three-finger toxin family. Short-chain subfamily. In terms of tissue distribution, expressed by the venom gland.

The protein resides in the secreted. The protein is Short neurotoxin 3 of Oxyuranus scutellatus scutellatus (Australian taipan).